The chain runs to 276 residues: Bifunctional esterase/perhydrolase DCH (276 aa).

The region spanning 23 to 254 (PVIFFHHGWP…NGKLISYPGF (232 aa)) is the AB hydrolase-1 domain. Catalysis depends on residues Ser-97, Asp-227, and His-256.

The protein belongs to the AB hydrolase superfamily. Bacterial non-heme haloperoxidase / perhydrolase family. As to quaternary structure, homodimer.

It catalyses the reaction 3,4-dihydrocoumarin + H2O = 3-(2-hydroxyphenyl)propanoate + H(+). It carries out the reaction peracetic acid + H2O = acetate + H2O2 + H(+). The catalysed reaction is a percarboxylic acid + H2O = a carboxylate + H2O2 + H(+). Inhibited by the serine protease inhibitors diisopropyl fluorophosphate and phenylmethanesulfonyl fluoride. In terms of biological role, multifunctional enzyme, which shows esterase and perhydrolase activities, and is capable of organic acid-assisted bromination of organic compounds. Catalyzes the hydrolysis of 3,4-dihydrocoumarin. Aromatic lactones other than 3,4-dihydrocoumarin, such as 2-coumaranone and homogentisic acid lactone, are also substrates, but their activities relative to that of 3,4-dihydrocoumarin are quite low. Also catalyzes the hydrolysis of several linear esters, with specificity toward methyl esters. In addition, shows perhydrolase activity and catalyzes the dose- and time-dependent degradation of peracetic acid, a broad-spectrum biocide, to acetic acid and hydrogen peroxide. It suggests that in vivo DCH may play a role in the oxidative stress defense system and detoxify peroxoacids in conjunction with the catalase, i.e. peroxoacids are first hydrolyzed to the corresponding acids and hydrogen peroxide by DCH, and then the resulting hydrogen peroxide is degraded by the catalase. Also shows organic acid-assisted bromination activity toward monochlorodimedon when incubated with hydrogen peroxide and dihydrocoumarin or an organic acid, such as acetate and n-butyrate. In Acinetobacter calcoaceticus, this protein is Bifunctional esterase/perhydrolase DCH.